A 342-amino-acid chain; its full sequence is Isopentenyl-diphosphate delta-isomerase (342 aa).

R6–K7 is a binding site for substrate. Residues S63, S64–T66, S94, and N122 contribute to the FMN site. S94–R96 lines the substrate pocket. Residue Q157 coordinates substrate. E158 serves as a coordination point for Mg(2+). Residues K189, T219, G269–K271, and A290–G291 contribute to the FMN site.

Belongs to the IPP isomerase type 2 family. In terms of assembly, homooctamer. Dimer of tetramers. FMN is required as a cofactor. It depends on NADPH as a cofactor. Mg(2+) serves as cofactor.

Its subcellular location is the cytoplasm. The catalysed reaction is isopentenyl diphosphate = dimethylallyl diphosphate. Its function is as follows. Involved in the biosynthesis of isoprenoids. Catalyzes the 1,3-allylic rearrangement of the homoallylic substrate isopentenyl (IPP) to its allylic isomer, dimethylallyl diphosphate (DMAPP). This is Isopentenyl-diphosphate delta-isomerase from Rickettsia bellii (strain RML369-C).